A 307-amino-acid chain; its full sequence is 4-hydroxy-3-methylbut-2-enyl diphosphate reductase (307 aa).

[4Fe-4S] cluster is bound at residue Cys-13. (2E)-4-hydroxy-3-methylbut-2-enyl diphosphate contacts are provided by His-42 and His-75. His-42 and His-75 together coordinate dimethylallyl diphosphate. Positions 42 and 75 each coordinate isopentenyl diphosphate. Cys-97 contacts [4Fe-4S] cluster. A (2E)-4-hydroxy-3-methylbut-2-enyl diphosphate-binding site is contributed by His-125. Dimethylallyl diphosphate is bound at residue His-125. His-125 contacts isopentenyl diphosphate. The active-site Proton donor is Glu-127. A (2E)-4-hydroxy-3-methylbut-2-enyl diphosphate-binding site is contributed by Thr-165. A [4Fe-4S] cluster-binding site is contributed by Cys-195. Residues Ser-223, Ser-224, Asn-225, and Ser-267 each coordinate (2E)-4-hydroxy-3-methylbut-2-enyl diphosphate. Dimethylallyl diphosphate-binding residues include Ser-223, Ser-224, Asn-225, and Ser-267. Positions 223, 224, 225, and 267 each coordinate isopentenyl diphosphate.

This sequence belongs to the IspH family. Requires [4Fe-4S] cluster as cofactor.

It carries out the reaction isopentenyl diphosphate + 2 oxidized [2Fe-2S]-[ferredoxin] + H2O = (2E)-4-hydroxy-3-methylbut-2-enyl diphosphate + 2 reduced [2Fe-2S]-[ferredoxin] + 2 H(+). The enzyme catalyses dimethylallyl diphosphate + 2 oxidized [2Fe-2S]-[ferredoxin] + H2O = (2E)-4-hydroxy-3-methylbut-2-enyl diphosphate + 2 reduced [2Fe-2S]-[ferredoxin] + 2 H(+). It functions in the pathway isoprenoid biosynthesis; dimethylallyl diphosphate biosynthesis; dimethylallyl diphosphate from (2E)-4-hydroxy-3-methylbutenyl diphosphate: step 1/1. It participates in isoprenoid biosynthesis; isopentenyl diphosphate biosynthesis via DXP pathway; isopentenyl diphosphate from 1-deoxy-D-xylulose 5-phosphate: step 6/6. In terms of biological role, catalyzes the conversion of 1-hydroxy-2-methyl-2-(E)-butenyl 4-diphosphate (HMBPP) into a mixture of isopentenyl diphosphate (IPP) and dimethylallyl diphosphate (DMAPP). Acts in the terminal step of the DOXP/MEP pathway for isoprenoid precursor biosynthesis. This is 4-hydroxy-3-methylbut-2-enyl diphosphate reductase from Chlamydia trachomatis serovar L2 (strain ATCC VR-902B / DSM 19102 / 434/Bu).